The chain runs to 140 residues: uncharacterized protein (140 aa).

This is an uncharacterized protein from Homo sapiens (Human).